Consider the following 248-residue polypeptide: tRNA pseudouridine synthase A (248 aa).

Asp-53 acts as the Nucleophile in catalysis. Tyr-111 is a binding site for substrate.

This sequence belongs to the tRNA pseudouridine synthase TruA family. As to quaternary structure, homodimer.

It catalyses the reaction uridine(38/39/40) in tRNA = pseudouridine(38/39/40) in tRNA. In terms of biological role, formation of pseudouridine at positions 38, 39 and 40 in the anticodon stem and loop of transfer RNAs. The chain is tRNA pseudouridine synthase A from Listeria innocua serovar 6a (strain ATCC BAA-680 / CLIP 11262).